Reading from the N-terminus, the 152-residue chain is Large ribosomal subunit protein bL9 (152 aa).

Belongs to the bacterial ribosomal protein bL9 family.

Its function is as follows. Binds to the 23S rRNA. In Corynebacterium urealyticum (strain ATCC 43042 / DSM 7109), this protein is Large ribosomal subunit protein bL9.